Here is a 214-residue protein sequence, read N- to C-terminus: Superoxide dismutase [Mn] (214 aa).

Mn(2+) is bound by residues histidine 27, histidine 82, aspartate 169, and histidine 173.

Belongs to the iron/manganese superoxide dismutase family. As to quaternary structure, homodimer. Mn(2+) is required as a cofactor.

It catalyses the reaction 2 superoxide + 2 H(+) = H2O2 + O2. In terms of biological role, destroys superoxide anion radicals which are normally produced within the cells and which are toxic to biological systems. This Pasteurella multocida (strain Pm70) protein is Superoxide dismutase [Mn] (sodA).